Here is a 209-residue protein sequence, read N- to C-terminus: NADH-quinone oxidoreductase subunit C (209 aa).

This sequence belongs to the complex I 30 kDa subunit family. As to quaternary structure, NDH-1 is composed of 14 different subunits. Subunits NuoB, C, D, E, F, and G constitute the peripheral sector of the complex.

The protein localises to the cell inner membrane. The catalysed reaction is a quinone + NADH + 5 H(+)(in) = a quinol + NAD(+) + 4 H(+)(out). NDH-1 shuttles electrons from NADH, via FMN and iron-sulfur (Fe-S) centers, to quinones in the respiratory chain. The immediate electron acceptor for the enzyme in this species is believed to be ubiquinone. Couples the redox reaction to proton translocation (for every two electrons transferred, four hydrogen ions are translocated across the cytoplasmic membrane), and thus conserves the redox energy in a proton gradient. The polypeptide is NADH-quinone oxidoreductase subunit C (Phenylobacterium zucineum (strain HLK1)).